The following is an 867-amino-acid chain: Leucine--tRNA ligase (867 aa).

Positions 40 to 51 (PYPSGAGLHVGH) match the 'HIGH' region motif. A 'KMSKS' region motif is present at residues 638-642 (KMSKS). K641 contributes to the ATP binding site.

It belongs to the class-I aminoacyl-tRNA synthetase family.

It is found in the cytoplasm. The catalysed reaction is tRNA(Leu) + L-leucine + ATP = L-leucyl-tRNA(Leu) + AMP + diphosphate. The polypeptide is Leucine--tRNA ligase (Leptospira biflexa serovar Patoc (strain Patoc 1 / Ames)).